Reading from the N-terminus, the 397-residue chain is Elongation factor Tu (397 aa).

Residues 10-207 (KPHVNIGTIG…AVDESIPEPV (198 aa)) form the tr-type G domain. A G1 region spans residues 19–26 (GHVDHGKT). 19–26 (GHVDHGKT) serves as a coordination point for GTP. T26 provides a ligand contact to Mg(2+). Residues 63–67 (GITIN) form a G2 region. The interval 84–87 (DAPG) is G3. Residues 84-88 (DAPGH) and 139-142 (NKSD) each bind GTP. Residues 139–142 (NKSD) form a G4 region. Residues 177–179 (SGL) are G5.

The protein belongs to the TRAFAC class translation factor GTPase superfamily. Classic translation factor GTPase family. EF-Tu/EF-1A subfamily. In terms of assembly, monomer.

The protein resides in the cytoplasm. It catalyses the reaction GTP + H2O = GDP + phosphate + H(+). In terms of biological role, GTP hydrolase that promotes the GTP-dependent binding of aminoacyl-tRNA to the A-site of ribosomes during protein biosynthesis. The protein is Elongation factor Tu of Clavibacter sepedonicus (Clavibacter michiganensis subsp. sepedonicus).